The chain runs to 82 residues: Probable acyl carrier protein IacP (82 aa).

In terms of domain architecture, Carrier spans 3 to 78; the sequence is MDIEARVKKV…DICRVVKKSL (76 aa). At Ser-38 the chain carries O-(pantetheine 4'-phosphoryl)serine.

4'-phosphopantetheine is transferred from CoA to a specific serine of apo-IacP.

The protein localises to the cytoplasm. Its function is as follows. Acyl carrier protein. The polypeptide is Probable acyl carrier protein IacP (iacP) (Salmonella typhimurium (strain SL1344)).